The chain runs to 365 residues: UPF0324 membrane protein Cj0999c (365 aa).

The next 11 helical transmembrane spans lie at 12–34 (IVRS…MYLS), 44–63 (HLAA…PWFF), 83–100 (LGIV…LLSV), 105–127 (FLLS…TKIF), 134–153 (SMLV…LALE), 163–185 (GILA…PIAF), 197–219 (AMGV…AEMA), 234–256 (VIIK…YFFA), 269–288 (SITI…LNTY), 303–325 (IISL…LGLQ), and 338–360 (VFGL…TLAF).

Belongs to the UPF0324 family.

Its subcellular location is the cell membrane. This Campylobacter jejuni subsp. jejuni serotype O:2 (strain ATCC 700819 / NCTC 11168) protein is UPF0324 membrane protein Cj0999c.